The primary structure comprises 76 residues: MARICAITGRRPVKGSIINRKGQSKKSGGIGTHVTTITKRKFRPNLQRIRVKLPNGGTKRMLVSVKALKAGLVEKA.

The protein belongs to the bacterial ribosomal protein bL28 family.

This Opitutus terrae (strain DSM 11246 / JCM 15787 / PB90-1) protein is Large ribosomal subunit protein bL28.